The chain runs to 554 residues: Formate--tetrahydrofolate ligase (554 aa).

Residue Thr63–Thr70 coordinates ATP.

This sequence belongs to the formate--tetrahydrofolate ligase family.

The catalysed reaction is (6S)-5,6,7,8-tetrahydrofolate + formate + ATP = (6R)-10-formyltetrahydrofolate + ADP + phosphate. It functions in the pathway one-carbon metabolism; tetrahydrofolate interconversion. This chain is Formate--tetrahydrofolate ligase, found in Halothermothrix orenii (strain H 168 / OCM 544 / DSM 9562).